The following is a 222-amino-acid chain: UPF0585 protein CG18661 (222 aa).

It belongs to the UPF0585 family.

This Drosophila melanogaster (Fruit fly) protein is UPF0585 protein CG18661.